A 306-amino-acid polypeptide reads, in one-letter code: Curved DNA-binding protein (306 aa).

Residues 5 to 69 (DYYAIMGVKP…QRRAEYDQMW (65 aa)) form the J domain.

The protein resides in the cytoplasm. It localises to the nucleoid. Functionally, DNA-binding protein that preferentially recognizes a curved DNA sequence. It is probably a functional analog of DnaJ; displays overlapping activities with DnaJ, but functions under different conditions, probably acting as a molecular chaperone in an adaptive response to environmental stresses other than heat shock. Lacks autonomous chaperone activity; binds native substrates and targets them for recognition by DnaK. Its activity is inhibited by the binding of CbpM. The sequence is that of Curved DNA-binding protein from Escherichia coli O157:H7.